A 245-amino-acid chain; its full sequence is Large ribosomal subunit protein uL2 (245 aa).

Residues 196-226 (SPYAHPHGGGSHQKGGTPVSKTAPPGQKVGF) form a disordered region.

This sequence belongs to the universal ribosomal protein uL2 family. As to quaternary structure, part of the 50S ribosomal subunit. Forms a bridge to the 30S subunit in the 70S ribosome.

In terms of biological role, one of the primary rRNA binding proteins. Required for association of the 30S and 50S subunits to form the 70S ribosome, for tRNA binding and peptide bond formation. It has been suggested to have peptidyltransferase activity; this is somewhat controversial. Makes several contacts with the 16S rRNA in the 70S ribosome. The polypeptide is Large ribosomal subunit protein uL2 (Pyrobaculum neutrophilum (strain DSM 2338 / JCM 9278 / NBRC 100436 / V24Sta) (Thermoproteus neutrophilus)).